The primary structure comprises 203 residues: Glycerol-3-phosphate acyltransferase (203 aa).

The next 4 membrane-spanning stretches (helical) occupy residues 4 to 24 (LVLL…AVLI), 80 to 100 (PFLL…PIFF), 116 to 136 (APIG…TVFI), and 138 to 158 (GYSS…TWFV).

Belongs to the PlsY family. Probably interacts with PlsX.

It is found in the cell inner membrane. It catalyses the reaction an acyl phosphate + sn-glycerol 3-phosphate = a 1-acyl-sn-glycero-3-phosphate + phosphate. Its pathway is lipid metabolism; phospholipid metabolism. Catalyzes the transfer of an acyl group from acyl-phosphate (acyl-PO(4)) to glycerol-3-phosphate (G3P) to form lysophosphatidic acid (LPA). This enzyme utilizes acyl-phosphate as fatty acyl donor, but not acyl-CoA or acyl-ACP. The polypeptide is Glycerol-3-phosphate acyltransferase (Photobacterium profundum (strain SS9)).